A 131-amino-acid chain; its full sequence is Small ribosomal subunit protein uS11 (131 aa).

Belongs to the universal ribosomal protein uS11 family. As to quaternary structure, part of the 30S ribosomal subunit.

Functionally, located on the platform of the 30S subunit. The chain is Small ribosomal subunit protein uS11 from Methanospirillum hungatei JF-1 (strain ATCC 27890 / DSM 864 / NBRC 100397 / JF-1).